Here is a 119-residue protein sequence, read N- to C-terminus: Large ribosomal subunit protein bL19 (119 aa).

The protein belongs to the bacterial ribosomal protein bL19 family.

Its function is as follows. This protein is located at the 30S-50S ribosomal subunit interface and may play a role in the structure and function of the aminoacyl-tRNA binding site. This is Large ribosomal subunit protein bL19 from Arthrobacter sp. (strain FB24).